The primary structure comprises 131 residues: Small ribosomal subunit protein eS24 (131 aa).

Residue methionine 1 is modified to N-acetylmethionine. A Phosphothreonine modification is found at threonine 9. Residue lysine 37 forms a Glycyl lysine isopeptide (Lys-Gly) (interchain with G-Cter in SUMO2) linkage. The span at 90-100 (RLARHGLYEKK) shows a compositional bias: basic and acidic residues. Residues 90-131 (RLARHGLYEKKKTSRKQRKERKNRMKKVRGTAKANVGAGKKK) are disordered. Positions 101-119 (KTSRKQRKERKNRMKKVRG) are enriched in basic residues.

Belongs to the eukaryotic ribosomal protein eS24 family. Component of the small ribosomal subunit. Part of the small subunit (SSU) processome, composed of more than 70 proteins and the RNA chaperone small nucleolar RNA (snoRNA) U3.

Its subcellular location is the cytoplasm. The protein resides in the nucleus. It localises to the nucleolus. In terms of biological role, component of the small ribosomal subunit. The ribosome is a large ribonucleoprotein complex responsible for the synthesis of proteins in the cell. Required for processing of pre-rRNA and maturation of 40S ribosomal subunits. Part of the small subunit (SSU) processome, first precursor of the small eukaryotic ribosomal subunit. During the assembly of the SSU processome in the nucleolus, many ribosome biogenesis factors, an RNA chaperone and ribosomal proteins associate with the nascent pre-rRNA and work in concert to generate RNA folding, modifications, rearrangements and cleavage as well as targeted degradation of pre-ribosomal RNA by the RNA exosome. The polypeptide is Small ribosomal subunit protein eS24 (RPS24) (Pongo abelii (Sumatran orangutan)).